Here is a 275-residue protein sequence, read N- to C-terminus: Release factor glutamine methyltransferase (275 aa).

S-adenosyl-L-methionine-binding positions include 114–118 (GTGSG), Asp-137, Trp-165, and Asn-180. Position 180–183 (180–183 (NPPY)) interacts with substrate.

Belongs to the protein N5-glutamine methyltransferase family. PrmC subfamily.

It catalyses the reaction L-glutaminyl-[peptide chain release factor] + S-adenosyl-L-methionine = N(5)-methyl-L-glutaminyl-[peptide chain release factor] + S-adenosyl-L-homocysteine + H(+). Functionally, methylates the class 1 translation termination release factors RF1/PrfA and RF2/PrfB on the glutamine residue of the universally conserved GGQ motif. The sequence is that of Release factor glutamine methyltransferase from Xylella fastidiosa (strain 9a5c).